The sequence spans 456 residues: UDP-N-acetylmuramate--L-alanine ligase (456 aa).

ATP is bound at residue 112–118 (GAHGKTS).

This sequence belongs to the MurCDEF family.

It localises to the cytoplasm. It carries out the reaction UDP-N-acetyl-alpha-D-muramate + L-alanine + ATP = UDP-N-acetyl-alpha-D-muramoyl-L-alanine + ADP + phosphate + H(+). It functions in the pathway cell wall biogenesis; peptidoglycan biosynthesis. In terms of biological role, cell wall formation. This is UDP-N-acetylmuramate--L-alanine ligase from Desulforapulum autotrophicum (strain ATCC 43914 / DSM 3382 / VKM B-1955 / HRM2) (Desulfobacterium autotrophicum).